Here is a 140-residue protein sequence, read N- to C-terminus: Transcription antitermination protein NusB (140 aa).

It belongs to the NusB family.

In terms of biological role, involved in transcription antitermination. Required for transcription of ribosomal RNA (rRNA) genes. Binds specifically to the boxA antiterminator sequence of the ribosomal RNA (rrn) operons. This is Transcription antitermination protein NusB from Pseudoalteromonas atlantica (strain T6c / ATCC BAA-1087).